We begin with the raw amino-acid sequence, 338 residues long: MSTLRLLISDSYDPWFNLAVEECIFRQMPATQRVLFLWRNADTVVIGRAQNPWKECNTRRMEEDNVRLARRSSGGGAVFHDLGNTCFTFMAGKPEYDKTISTSIVLNALNALGVSAEASGRNDLVVKTVEGDRKVSGSAYRETKDRGFHHGTLLLNADLSRLANYLNPDKKKLAAKGITSVRSRVTNLTELLPGITHEQVCEAITEAFFAHYGERVEAEIISPNKTPDLPNFAETFARQSSWEWNFGQAPAFSHLLDERFTWGGVELHFDVEKGHITRAQVFTDSLNPAPLEALAGRLQGCLYRADMLQQECEALLVDFPEQEKELRELSAWMAGAVR.

Positions 29–216 constitute a BPL/LPL catalytic domain; sequence PATQRVLFLW…AFFAHYGERV (188 aa). ATP contacts are provided by residues arginine 71, 76-79, and lysine 134; that span reads GAVF. (R)-lipoate is bound at residue lysine 134.

It belongs to the LplA family. In terms of assembly, monomer.

Its subcellular location is the cytoplasm. It catalyses the reaction L-lysyl-[lipoyl-carrier protein] + (R)-lipoate + ATP = N(6)-[(R)-lipoyl]-L-lysyl-[lipoyl-carrier protein] + AMP + diphosphate + H(+). Its pathway is protein modification; protein lipoylation via exogenous pathway; protein N(6)-(lipoyl)lysine from lipoate: step 1/2. The protein operates within protein modification; protein lipoylation via exogenous pathway; protein N(6)-(lipoyl)lysine from lipoate: step 2/2. In terms of biological role, catalyzes both the ATP-dependent activation of exogenously supplied lipoate to lipoyl-AMP and the transfer of the activated lipoyl onto the lipoyl domains of lipoate-dependent enzymes. The polypeptide is Lipoate-protein ligase A (Escherichia coli (strain K12 / MC4100 / BW2952)).